A 663-amino-acid chain; its full sequence is Methionine--tRNA ligase (663 aa).

Positions 13–23 (PYTNGPCHLGH) match the 'HIGH' region motif. Zn(2+) contacts are provided by C144, C147, C156, and C160. The short motif at 326 to 330 (KFSKS) is the 'KMSKS' region element. K329 serves as a coordination point for ATP. In terms of domain architecture, tRNA-binding spans 565-663 (EFGKMKLIVG…QAVEPGTPIR (99 aa)).

It belongs to the class-I aminoacyl-tRNA synthetase family. MetG type 1 subfamily. In terms of assembly, homodimer. Zn(2+) serves as cofactor.

It is found in the cytoplasm. The catalysed reaction is tRNA(Met) + L-methionine + ATP = L-methionyl-tRNA(Met) + AMP + diphosphate. Functionally, is required not only for elongation of protein synthesis but also for the initiation of all mRNA translation through initiator tRNA(fMet) aminoacylation. The chain is Methionine--tRNA ligase from Methanosphaerula palustris (strain ATCC BAA-1556 / DSM 19958 / E1-9c).